A 191-amino-acid chain; its full sequence is FMN reductase (NADH) RutF (191 aa).

It belongs to the non-flavoprotein flavin reductase family. RutF subfamily.

It catalyses the reaction FMNH2 + NAD(+) = FMN + NADH + 2 H(+). Its function is as follows. Catalyzes the reduction of FMN to FMNH2 which is used to reduce pyrimidine by RutA via the Rut pathway. The protein is FMN reductase (NADH) RutF of Escherichia coli O1:K1 / APEC.